Here is a 478-residue protein sequence, read N- to C-terminus: MLO-like protein 13 (478 aa).

Residues methionine 1–glutamate 10 are Extracellular-facing. Residues tyrosine 11–alanine 31 form a helical membrane-spanning segment. Over glutamate 32 to glutamate 60 the chain is Cytoplasmic. A helical transmembrane segment spans residues leucine 61–isoleucine 81. Over cysteine 82–histidine 145 the chain is Extracellular. A helical transmembrane segment spans residues isoleucine 146–glycine 166. Residues glycine 167–lysine 276 are Cytoplasmic-facing. 2 helical membrane passes run valine 277–glycine 297 and glycine 298–alanine 318. Residues lysine 319–glutamine 360 lie on the Cytoplasmic side of the membrane. A helical transmembrane segment spans residues leucine 361–phenylalanine 381. Topologically, residues threonine 382–leucine 400 are extracellular. Residues valine 401–valine 421 traverse the membrane as a helical segment. Over threonine 422–proline 478 the chain is Cytoplasmic. Residues asparagine 435–serine 456 are calmodulin-binding. Residues arginine 449–glutamate 462 show a composition bias toward basic and acidic residues. The interval arginine 449–proline 478 is disordered. Residues glutamine 464 to proline 478 show a composition bias toward polar residues.

This sequence belongs to the MLO family.

Its subcellular location is the membrane. Functionally, may be involved in modulation of pathogen defense and leaf cell death. Activity seems to be regulated by Ca(2+)-dependent calmodulin binding and seems not to require heterotrimeric G proteins. This is MLO-like protein 13 (MLO13) from Arabidopsis thaliana (Mouse-ear cress).